Reading from the N-terminus, the 148-residue chain is Putative nickel-responsive regulator (148 aa).

Residues H76, H87, H89, and C95 each contribute to the Ni(2+) site.

The protein belongs to the transcriptional regulatory CopG/NikR family. The cofactor is Ni(2+).

In terms of biological role, transcriptional regulator. The chain is Putative nickel-responsive regulator from Rhodopseudomonas palustris (strain ATCC BAA-98 / CGA009).